The chain runs to 317 residues: Protein phosphatase 1 regulatory subunit 3C (317 aa).

The PP1-binding motif motif lies at 84–87 (RVVF). The tract at residues 141-263 (PSSDYLSFRD…YRIVHVQWKP (123 aa)) is interaction with EPM2A. The CBM21 domain maps to 149-257 (RDRFQKNFVC…NNEAQNYRIV (109 aa)).

In terms of assembly, interacts with PPP1CC catalytic subunit of PP1 and associates with glycogen. Forms complexes with glycogen phosphorylase, glycogen synthase and phosphorylase kinase which is necessary for its regulation of PP1 activity. Also interacts with EPM2A/laforin. In terms of processing, ubiquitinated by NHLRC1/malin in a EPM2A/laforin-dependent manner.

Functionally, acts as a glycogen-targeting subunit for PP1 and regulates its activity. Activates glycogen synthase, reduces glycogen phosphorylase activity and limits glycogen breakdown. Dramatically increases basal and insulin-stimulated glycogen synthesis upon overexpression in a variety of cell types. The polypeptide is Protein phosphatase 1 regulatory subunit 3C (Rattus norvegicus (Rat)).